The following is a 382-amino-acid chain: Queuine tRNA-ribosyltransferase (382 aa).

Aspartate 93 serves as the catalytic Proton acceptor. Substrate is bound by residues 93–97 (DSGGF), aspartate 147, glutamine 191, and glycine 218. The RNA binding stretch occupies residues 249–255 (GVGKPED). Aspartate 268 functions as the Nucleophile in the catalytic mechanism. The tract at residues 273–277 (TRNAR) is RNA binding; important for wobble base 34 recognition. Positions 306, 308, 311, and 337 each coordinate Zn(2+).

Belongs to the queuine tRNA-ribosyltransferase family. As to quaternary structure, homodimer. Within each dimer, one monomer is responsible for RNA recognition and catalysis, while the other monomer binds to the replacement base PreQ1. Requires Zn(2+) as cofactor.

The enzyme catalyses 7-aminomethyl-7-carbaguanine + guanosine(34) in tRNA = 7-aminomethyl-7-carbaguanosine(34) in tRNA + guanine. The protein operates within tRNA modification; tRNA-queuosine biosynthesis. In terms of biological role, catalyzes the base-exchange of a guanine (G) residue with the queuine precursor 7-aminomethyl-7-deazaguanine (PreQ1) at position 34 (anticodon wobble position) in tRNAs with GU(N) anticodons (tRNA-Asp, -Asn, -His and -Tyr). Catalysis occurs through a double-displacement mechanism. The nucleophile active site attacks the C1' of nucleotide 34 to detach the guanine base from the RNA, forming a covalent enzyme-RNA intermediate. The proton acceptor active site deprotonates the incoming PreQ1, allowing a nucleophilic attack on the C1' of the ribose to form the product. After dissociation, two additional enzymatic reactions on the tRNA convert PreQ1 to queuine (Q), resulting in the hypermodified nucleoside queuosine (7-(((4,5-cis-dihydroxy-2-cyclopenten-1-yl)amino)methyl)-7-deazaguanosine). This Actinobacillus pleuropneumoniae serotype 3 (strain JL03) protein is Queuine tRNA-ribosyltransferase.